A 349-amino-acid chain; its full sequence is Heparin sulfate O-sulfotransferase (349 aa).

Over 1–17 (MFRKLLKMWILLRPTHW) the chain is Cytoplasmic. Residues 18–38 (LILIALCAVTCAGYWLLWSEI) traverse the membrane as a helical; Signal-anchor for type II membrane protein segment. Over 39 to 349 (RLEHAFKPLS…KFMYEKIRPK (311 aa)) the chain is Lumenal. N-linked (GlcNAc...) asparagine glycosylation is found at Asn-107 and Asn-126. Active-site residues include His-139 and His-141. 2 cysteine pairs are disulfide-bonded: Cys-200/Cys-208 and Cys-221/Cys-227. An N-linked (GlcNAc...) asparagine glycan is attached at Asn-282.

It belongs to the sulfotransferase 3 family. As to quaternary structure, homotrimer.

Its subcellular location is the golgi apparatus membrane. In terms of biological role, catalyzes the transfer of sulfate to the C2-position of selected hexuronic acid residues within the maturing heparan sulfate (HS). The sequence is that of Heparin sulfate O-sulfotransferase from Drosophila melanogaster (Fruit fly).